We begin with the raw amino-acid sequence, 383 residues long: S-adenosylmethionine synthase (383 aa).

Residue His-15 participates in ATP binding. Position 17 (Asp-17) interacts with Mg(2+). Glu-43 is a K(+) binding site. Residues Glu-56 and Gln-99 each contribute to the L-methionine site. A flexible loop region spans residues 99–109 (QSPDINQGVDR). ATP is bound by residues 164–166 (DAK), 230–231 (RF), Asp-239, 245–246 (RK), Ala-262, and Lys-266. L-methionine is bound at residue Asp-239. Residue Lys-270 coordinates L-methionine.

Belongs to the AdoMet synthase family. Homotetramer; dimer of dimers. The cofactor is Mg(2+). Requires K(+) as cofactor.

Its subcellular location is the cytoplasm. The catalysed reaction is L-methionine + ATP + H2O = S-adenosyl-L-methionine + phosphate + diphosphate. It participates in amino-acid biosynthesis; S-adenosyl-L-methionine biosynthesis; S-adenosyl-L-methionine from L-methionine: step 1/1. Catalyzes the formation of S-adenosylmethionine (AdoMet) from methionine and ATP. The overall synthetic reaction is composed of two sequential steps, AdoMet formation and the subsequent tripolyphosphate hydrolysis which occurs prior to release of AdoMet from the enzyme. The protein is S-adenosylmethionine synthase of Shewanella putrefaciens (strain CN-32 / ATCC BAA-453).